We begin with the raw amino-acid sequence, 284 residues long: BES1/BZR1 homolog protein 3 (284 aa).

Disordered regions lie at residues 1–21 (MTSGTRTPTWKERENNKRRER) and 85–116 (GSTSASPCSSYQHSPRASYNPSPSSSSFPSPT). The required for DNA-binding stretch occupies residues 6-88 (RTPTWKEREN…RMDLMNGSTS (83 aa)). Over residues 85–97 (GSTSASPCSSYQH) the composition is skewed to polar residues. Over residues 98–114 (SPRASYNPSPSSSSFPS) the composition is skewed to low complexity. Threonine 153 is subject to Phosphothreonine.

Belongs to the BZR/LAT61 family. Phosphorylated. Phosphorylation increases protein degradation.

The chain is BES1/BZR1 homolog protein 3 (BEH3) from Arabidopsis thaliana (Mouse-ear cress).